Consider the following 118-residue polypeptide: Protein MT2260 (118 aa).

It belongs to the HesB/IscA family.

The chain is Protein MT2260 from Mycobacterium tuberculosis (strain CDC 1551 / Oshkosh).